Reading from the N-terminus, the 264-residue chain is uncharacterized protein (264 aa).

The first 21 residues, Met1–Thr21, serve as a signal peptide directing secretion. Residues Gln182–Ser247 are disordered. Positions Pro190 to Pro213 are enriched in low complexity. Asn209 is a glycosylation site (N-linked (GlcNAc...) asparagine). Pro residues predominate over residues Pro214–Pro226. Residues Gly230–Ser247 show a composition bias toward polar residues.

In terms of tissue distribution, component of the acid-insoluble and acid-soluble organic matrix of calcified layers of the shell (at protein level).

The protein localises to the secreted. This is an uncharacterized protein from Lottia gigantea (Giant owl limpet).